An 862-amino-acid chain; its full sequence is MGAIAGEELKKMEKTQVHVAREEKILVLVRLRPLNEKEILANEAADWECINDTTVLYRNTLREGSTFPSAYSFDRVYRGECPTRQVYEDGPKEVALSVVKGINSSIFAYGQTSSGKTYTMSGITEFAVADIFDYIFKHEDRAFVVKFSAIEIYNEAIRDLLSPDSTPLRLRDDPEKGAAVEKATEETLRDWNHLKELISVCEAQRKIGETSLNERSSRSHQIIKLTVESSAREFLGKENSTTLMASVNFIDLAGSERASQALSAGARLKEGCHINRSLLTLGTVIRKLSNGRQGHINYRDSKLTRILQPCLGGNARTAIVCTLSPARSHVEQTRNTLLFACCAKEVTTKAQINVVMSDKALVKQLQRELARLESELRNPAPATSSCDCGVTLRKKDLQIQKMEKQLAEMTKQRDIAQSRLEDFMKMVEHDASSKAGTPHFRNRTNKWEDGSVSEISGVVDPDRTSFISDGTSTPLSTARAHVRSHSDDDLEEEMSPRHSGDQSEEYCKEVQCIEMEESTRDINNDSEERTDAETLLGHNAEANGETGSAQHRIPSSVRSVRRRKSWSRGDTMTGTSTPPDALETDYRGRPEGHGFAFPDLEFGSGGKLLRNDSMTSRGSDSTEAHSIGTPLVGEEGGITSIRSFVEGLKEMVSDPENSGKMRKDIGVDAMEEEVSGTMTNWSEEFERQREQILGLWQTCHVSLVHRTYFFLLFTGDQADSIYIGVELRRLSFMKESFSQGNHAFERGQTLTIASSLKALHRERRMLSKLVGKRFTGEERKRLYQKFGIAVNSKRRRLQLANQLWSKPNDITHAVESAAVVAKLVRFVEQGRAMKEMFGLSFTPPLPTTRRSLNWRKSMATLF.

The Kinesin motor domain maps to K24–V346. Residue G110–T117 coordinates ATP. Residues V355–E428 adopt a coiled-coil conformation. Disordered stretches follow at residues R463–E505 and A542–V632. Polar residues predominate over residues S465–S476. The segment covering M494–E505 has biased composition (basic and acidic residues). The span at D612–S621 shows a compositional bias: polar residues. K734 participates in a covalent cross-link: Glycyl lysine isopeptide (Lys-Gly) (interchain with G-Cter in ubiquitin).

The protein belongs to the TRAFAC class myosin-kinesin ATPase superfamily. Kinesin family. KIN-7 subfamily.

The protein is Kinesin-like protein KIN-7E of Arabidopsis thaliana (Mouse-ear cress).